The sequence spans 492 residues: MTLWINGDWITGQGERRRKTNPVSEEILWQGNDADAAQVAEACQAARAAFPRWARQPFAARQAIVEKFSVLLEAHKADLTEVIARETGKPRWEAATEVTAMINKIAISIKAYHARTGEQKSELVDGAATLRHRPHGVLAVFGPYNFPGHLPNGHIVPALLAGNTLIFKPSELTPWTGETVIKLWERAGLPAGVLNLVQGGRETGQALSSLDDLDGLLFTGSASTGYQLHRQLSGQPEKILALEMGGNNPLIIEDATNMDAAVHLTLQSAFITAGQRCTCARRLLVKQGAQGDAFLARLVDVAGRLQPGRWDDDPQPFIGGLISAQAAQHVMEAWRQREALGGRTLLAPRKVKEGTSLLTPGIIELTGVADVPDEEVFGPLLNVWRYAHFDEAIRLANNTRFGLSCGLVSTDRAQFEQLLLEARAGIVNWNKPLTGAASTAPFGGVGASGNHRPSAWYAADYCAWPMASLESPELTLPATLSPGLDFSRREAV.

Residue 220-225 participates in NAD(+) binding; it reads GSASTG. Catalysis depends on residues E243 and C277.

Belongs to the aldehyde dehydrogenase family. AstD subfamily.

It catalyses the reaction N-succinyl-L-glutamate 5-semialdehyde + NAD(+) + H2O = N-succinyl-L-glutamate + NADH + 2 H(+). The protein operates within amino-acid degradation; L-arginine degradation via AST pathway; L-glutamate and succinate from L-arginine: step 4/5. In terms of biological role, catalyzes the NAD-dependent reduction of succinylglutamate semialdehyde into succinylglutamate. In Salmonella typhi, this protein is N-succinylglutamate 5-semialdehyde dehydrogenase.